Here is a 382-residue protein sequence, read N- to C-terminus: Serine/arginine-rich splicing factor SR45a (382 aa).

4 stretches are compositionally biased toward low complexity: residues 30-45 (PMSYSRRSRYSPSLSP), 54-68 (VSRSLSRSPTRSVSS), 177-195 (PSYSPRRSVSCSRSRSRSY), and 202-219 (SYSPSYGRRGRSSSYSPF). Disordered stretches follow at residues 30 to 76 (PMSY…PGNS) and 150 to 382 (KARR…SVSP). Residues 288 to 316 (RARDRSCSPYYRGRDRSYSPHYQGRDRSY) are compositionally biased toward basic and acidic residues. Residues 329-343 (VSGSVSPGGRSMSRS) show a composition bias toward low complexity. Basic residues predominate over residues 345 to 361 (SPRKGRKESRSKSRRHD). The segment covering 364 to 382 (SSMCHSRSARSSTSRSVSP) has biased composition (low complexity).

It belongs to the splicing factor SR family. SR45 subfamily. Component of the spliceosome. Homodimer. Interacts with PRP38, SCL28, SR45, RNU1 and U2AF35B. In terms of processing, phosphorylated. In terms of tissue distribution, expressed in leaves, stems and roots.

Its subcellular location is the nucleus speckle. In terms of biological role, probable splicing factor involved in constitutive and/or alternative splicing events. May bridge the 5' and 3' components of the spliceosome. In Arabidopsis thaliana (Mouse-ear cress), this protein is Serine/arginine-rich splicing factor SR45a (SR45A).